The chain runs to 88 residues: UPF0223 protein RBAM_014500 (88 aa).

The protein belongs to the UPF0223 family.

The sequence is that of UPF0223 protein RBAM_014500 from Bacillus velezensis (strain DSM 23117 / BGSC 10A6 / LMG 26770 / FZB42) (Bacillus amyloliquefaciens subsp. plantarum).